The primary structure comprises 287 residues: Small ribosomal subunit protein uS10m (287 aa).

A mitochondrion-targeting transit peptide spans 1 to 33 (MSLFSPHRILLRTGSAFQLATATRALLSTSSQL). Polar residues predominate over residues 33–43 (LRNTKNAQSGL). Positions 33–84 (LRNTKNAQSGLAEQARAEEPVASSPSQTTRPEQKSLEEETTKQTQTHADSTV) are disordered. Positions 63 to 73 (PEQKSLEEETT) are enriched in basic and acidic residues. A compositionally biased stretch (polar residues) spans 74–84 (KQTQTHADSTV).

The protein belongs to the universal ribosomal protein uS10 family. In terms of assembly, part of the mitochondrial small ribosomal subunit.

The protein localises to the mitochondrion. In terms of biological role, involved in mitochondrial genome encoded proteins translation. Involved in the binding of tRNA to the ribosomes. This is Small ribosomal subunit protein uS10m (rsm10) from Emericella nidulans (strain FGSC A4 / ATCC 38163 / CBS 112.46 / NRRL 194 / M139) (Aspergillus nidulans).